The chain runs to 495 residues: UDP-glycosyltransferase 73C11 (495 aa).

His-24 (proton acceptor) is an active-site residue. His-24 lines the an anthocyanidin pocket. The Charge relay role is filled by Asp-129. UDP-alpha-D-glucose is bound by residues Gln-358, His-373, Trp-376, Asn-377, Ser-378, and Glu-381. An anthocyanidin is bound at residue Gly-396. Residues Asp-397 and Gln-398 each contribute to the UDP-alpha-D-glucose site.

This sequence belongs to the UDP-glycosyltransferase family.

It carries out the reaction oleanolate + UDP-alpha-D-glucose = oleanolate 3-O-beta-D-glucoside + UDP + H(+). Catalyzes the transfer of a glucose (Glc) moiety from UDP-Glc to the C-3 position of the oleanane sapogenins oleanolate and hederagenin, and to the C-28 carboxylic group of the lupane sapogenin betulinate. The monoglucosylated hederagenin 3-O-beta-D-glucoside is a feeding deterrent of the yellow-striped flea beetle (Phyllotreta nemorum). This chain is UDP-glycosyltransferase 73C11, found in Barbarea vulgaris (Yellow rocket).